The chain runs to 79 residues: Acyl carrier protein (79 aa).

Residues 2 to 77 enclose the Carrier domain; sequence SEIGERVKKI…DATKFLEKNA (76 aa). Ser-37 carries the O-(pantetheine 4'-phosphoryl)serine modification.

This sequence belongs to the acyl carrier protein (ACP) family. 4'-phosphopantetheine is transferred from CoA to a specific serine of apo-ACP by AcpS. This modification is essential for activity because fatty acids are bound in thioester linkage to the sulfhydryl of the prosthetic group.

The protein localises to the cytoplasm. It functions in the pathway lipid metabolism; fatty acid biosynthesis. Functionally, carrier of the growing fatty acid chain in fatty acid biosynthesis. The protein is Acyl carrier protein of Afipia carboxidovorans (strain ATCC 49405 / DSM 1227 / KCTC 32145 / OM5) (Oligotropha carboxidovorans).